Consider the following 229-residue polypeptide: Nisin biosynthesis regulatory protein NisR (229 aa).

Residues 4–117 form the Response regulatory domain; sequence KILIVDDDQE…QLVAKVEANI (114 aa). The residue at position 53 (aspartate 53) is a 4-aspartylphosphate. The ompR/PhoB-type DNA-binding region spans 132–229; that stretch reads EIRRDLGPIT…VRGLGYQWHG (98 aa).

Phosphorylated by NisK.

Functionally, member of the two-component regulatory system NisK/NisR involved in the regulation of the biosynthesis of lantibiotic nisin. NisR may function as a regulatory protein. This is Nisin biosynthesis regulatory protein NisR (nisR) from Lactococcus lactis subsp. lactis (Streptococcus lactis).